A 426-amino-acid polypeptide reads, in one-letter code: Large envelope protein (426 aa).

The N-myristoyl glycine; by host moiety is linked to residue Gly2. Residues 2–143 (GNNIKVTFNP…PPLRDTHPHL (142 aa)) form a pre-S1 region. Residues 2-202 (GNNIKVTFNP…PSTTGDPAQS (201 aa)) form a pre-S region. Residues 2 to 209 (GNNIKVTFNP…AQSPEMSPSS (208 aa)) are Virion surface; in external conformation-facing. Residues 2-281 (GNNIKVTFNP…NGFRWMYLRR (280 aa)) are Intravirion; in internal conformation-facing. Asn3 carries N-linked (GlcNAc...) asparagine glycosylation. The segment at 107 to 142 (IRDIPRGLVPPQTPTNRDQGRKPTPPTPPLRDTHPH) is disordered. The pre-S2 stretch occupies residues 144–202 (TMKNQTFHLQGFVDGLRDLTTTERQHNAYGDPFTTLSPVVPTVSTILSPPSTTGDPAQS). Residues 210 to 230 (LLGLLAGLQVVYFLWTKILTI) form a helical membrane-spanning segment. At 231–281 (AQNLDWWWTSLSFPGGIPECTGQNSQFQTCKHLPTSCPPTCNGFRWMYLRR) the chain is on the intravirion; in external conformation side. Residues 282–302 (FIIYLLVLLLCLIFLLVLLDW) traverse the membrane as a helical segment. At 303 to 374 (KGLIPVCPIQ…WALARFSWLN (72 aa)) the chain is on the virion surface side. N-linked (GlcNAc...) asparagine; by host glycosylation is present at Asn346. A helical transmembrane segment spans residues 375–395 (LLVPLLQWLGGISLIAWFLLI). Residues 396–401 (WMIWFW) lie on the Intravirion side of the membrane. Residues 402–424 (GPALLSILPPFIPIFVLFFLIWV) form a helical membrane-spanning segment. Residues 425-426 (YI) are Virion surface-facing.

Belongs to the orthohepadnavirus major surface antigen family. In its internal form (Li-HBsAg), interacts with the capsid protein and with the isoform S. Interacts with host chaperone CANX. As to quaternary structure, associates with host chaperone CANX through its pre-S2 N glycan; this association may be essential for isoform M proper secretion. In terms of assembly, interacts with isoform L. Interacts with the antigens of satellite virus HDV (HDVAgs); this interaction is required for encapsidation of HDV genomic RNA. In terms of processing, isoform M is N-terminally acetylated by host at a ratio of 90%, and N-glycosylated by host at the pre-S2 region. Post-translationally, myristoylated.

The protein localises to the virion membrane. Its function is as follows. The large envelope protein exists in two topological conformations, one which is termed 'external' or Le-HBsAg and the other 'internal' or Li-HBsAg. In its external conformation the protein attaches the virus to cell receptors and thereby initiating infection. This interaction determines the species specificity and liver tropism. This attachment induces virion internalization predominantly through caveolin-mediated endocytosis. The large envelope protein also assures fusion between virion membrane and endosomal membrane. In its internal conformation the protein plays a role in virion morphogenesis and mediates the contact with the nucleocapsid like a matrix protein. The middle envelope protein plays an important role in the budding of the virion. It is involved in the induction of budding in a nucleocapsid independent way. In this process the majority of envelope proteins bud to form subviral lipoprotein particles of 22 nm of diameter that do not contain a nucleocapsid. This chain is Large envelope protein, found in Marmota monax (Woodchuck).